Consider the following 291-residue polypeptide: START domain-containing protein 10 (291 aa).

N-acetylmethionine is present on M1. The tract at residues M1 to Q23 is disordered. Positions R14–E224 constitute an START domain. N6-succinyllysine occurs at positions 94, 197, and 202. Residues S253, S259, S284, and S289 each carry the phosphoserine modification. Residues L260 to T291 are disordered.

Post-translationally, phosphorylation at Ser-284 by CK2 negatively regulates lipid transfer activity, possibly by decreasing membrane association. As to expression, testis, kidney, liver, and intestine with the highest level in the testis.

Its subcellular location is the cell projection. It localises to the cilium. The protein resides in the flagellum. The protein localises to the cytoplasm. It is found in the membrane. Its function is as follows. Phospholipid transfer protein that preferentially selects lipid species containing a palmitoyl or stearoyl chain on the sn-1 and an unsaturated fatty acyl chain (18:1 or 18:2) on the sn-2 position. Able to transfer phosphatidylcholine (PC) and phosphatidyetanolamline (PE) between membranes. May play metabolic roles in sperm maturation or fertilization. This Mus musculus (Mouse) protein is START domain-containing protein 10 (Stard10).